The following is a 95-amino-acid chain: MRIEVIKREENVLEFYLEGEDHTFANLLNEVLHENEHVTFAGYTIEHPVLMARKPKFRVVTDGKITPEQVLEEAAQKIFDRARAVLEAWKEVLGE.

The protein belongs to the archaeal Rpo11/eukaryotic RPB11/RPC19 RNA polymerase subunit family. In terms of assembly, part of the RNA polymerase complex.

It is found in the cytoplasm. It carries out the reaction RNA(n) + a ribonucleoside 5'-triphosphate = RNA(n+1) + diphosphate. DNA-dependent RNA polymerase (RNAP) catalyzes the transcription of DNA into RNA using the four ribonucleoside triphosphates as substrates. The protein is DNA-directed RNA polymerase subunit Rpo11 of Thermococcus onnurineus (strain NA1).